The chain runs to 146 residues: Aspartate 1-decarboxylase (146 aa).

S25 serves as the catalytic Schiff-base intermediate with substrate; via pyruvic acid. S25 carries the pyruvic acid (Ser) modification. Substrate is bound at residue T57. The active-site Proton donor is the Y58. Substrate is bound at residue 73 to 75; it reads GPA.

This sequence belongs to the PanD family. As to quaternary structure, heterooctamer of four alpha and four beta subunits. Pyruvate serves as cofactor. In terms of processing, is synthesized initially as an inactive proenzyme, which is activated by self-cleavage at a specific serine bond to produce a beta-subunit with a hydroxyl group at its C-terminus and an alpha-subunit with a pyruvoyl group at its N-terminus.

It is found in the cytoplasm. The catalysed reaction is L-aspartate + H(+) = beta-alanine + CO2. The protein operates within cofactor biosynthesis; (R)-pantothenate biosynthesis; beta-alanine from L-aspartate: step 1/1. Catalyzes the pyruvoyl-dependent decarboxylation of aspartate to produce beta-alanine. The sequence is that of Aspartate 1-decarboxylase from Salinibacter ruber (strain DSM 13855 / M31).